The sequence spans 359 residues: Ribosomal RNA small subunit methyltransferase H (359 aa).

S-adenosyl-L-methionine is bound by residues 39-41 (AGH), Asp-58, Phe-87, Asp-108, and Gln-115. Residues 339-359 (IQGSASPGRAKNTARIRTRRG) form a disordered region. A compositionally biased stretch (basic residues) spans 350–359 (NTARIRTRRG).

This sequence belongs to the methyltransferase superfamily. RsmH family.

The protein resides in the cytoplasm. It catalyses the reaction cytidine(1402) in 16S rRNA + S-adenosyl-L-methionine = N(4)-methylcytidine(1402) in 16S rRNA + S-adenosyl-L-homocysteine + H(+). Its function is as follows. Specifically methylates the N4 position of cytidine in position 1402 (C1402) of 16S rRNA. This Bifidobacterium longum (strain DJO10A) protein is Ribosomal RNA small subunit methyltransferase H.